Reading from the N-terminus, the 300-residue chain is Taste receptor type 2 member 105 (300 aa).

Residues 1 to 7 are Extracellular-facing; it reads MLSAAEG. Residues 8 to 28 form a helical membrane-spanning segment; it reads ILLSIATVEAGLGVLGNTFIA. At 29 to 43 the chain is on the cytoplasmic side; the sequence is LVNCMDWAKNNKLSM. A helical membrane pass occupies residues 44-64; it reads TGFLLIGLATSRIFIVWLLTL. The Extracellular segment spans residues 65-87; the sequence is DAYAKLFYPSKYFSSSLIEIISY. A helical transmembrane segment spans residues 88-108; sequence IWMTVNHLTVWFATSLSIFYF. Over 109–128 the chain is Cytoplasmic; sequence LKIANFSDCVFLWLKRRTDK. Residues 129 to 149 form a helical membrane-spanning segment; the sequence is AFVFLLGCLLTSWVISFSFVV. The Extracellular segment spans residues 150-181; it reads KVMKDGKVNHRNRTSEMYWEKRQFTINYVFLN. N161 is a glycosylation site (N-linked (GlcNAc...) asparagine). The helical transmembrane segment at 182-202 threads the bilayer; it reads IGVISLFMMTLTACFLLIMSL. The Cytoplasmic segment spans residues 203 to 233; that stretch reads WRHSRQMQSGVSGFRDLNTEAHVKAIKFLIS. The chain crosses the membrane as a helical span at residues 234–254; sequence FIILFVLYFIGVSIEIICIFI. Residues 255–259 are Extracellular-facing; the sequence is PENKL. A helical membrane pass occupies residues 260–280; that stretch reads LFIFGFTTASIYPCCHSFILI. Topologically, residues 281 to 300 are cytoplasmic; that stretch reads LSNSQLKQAFVKVLQGLKFF.

Belongs to the G-protein coupled receptor T2R family. In terms of tissue distribution, expressed in subsets of taste receptor cells of the tongue and palate epithelium and exclusively in gustducin-positive cells. Expressed in gastric and duodenal tissues.

The protein resides in the membrane. Its function is as follows. Gustducin-coupled cycloheximide receptor implicated in the perception of bitter compounds in the oral cavity and the gastrointestinal tract. Signals through PLCB2 and the calcium-regulated cation channel TRPM5. The protein is Taste receptor type 2 member 105 (Tas2r105) of Mus musculus (Mouse).